A 902-amino-acid polypeptide reads, in one-letter code: Proline-rich transmembrane protein 4 (902 aa).

The signal sequence occupies residues 1–18; the sequence is MAGRGCLELGLFCWVLLA. Disordered stretches follow at residues 120–149 and 262–337; these read FTPW…SQPR and PPPL…SGQP. The span at 125-139 shows a compositional bias: low complexity; it reads SSLPPESTSPLSGPT. A compositionally biased stretch (polar residues) spans 271–301; the sequence is SSPSPLDSVASPSSASIKTTPVQHDPTVSTS. A run of 5 helical transmembrane segments spans residues 371–391, 393–413, 431–451, 465–485, and 501–521; these read AGAL…LLPW, CPPG…AGTT, ALAW…GLGL, PIGL…AALG, and GLHA…SCWG. S642 bears the Phosphoserine mark. Disordered regions lie at residues 700-721, 771-811, and 836-872; these read GARA…TVDF, KTGA…SLCG, and VLSP…ASEL. The span at 703–717 shows a compositional bias: polar residues; it reads ANTTQSPASSPSSDC. Residues 786–798 show a composition bias toward pro residues; sequence SPAPPELPSPGAW. Composition is skewed to low complexity over residues 799-811 and 843-854; these read PPGS…SLCG and SESSPSLPASGS.

It localises to the membrane. This Rattus norvegicus (Rat) protein is Proline-rich transmembrane protein 4 (Prrt4).